The following is a 707-amino-acid chain: DNA ligase (707 aa).

NAD(+)-binding positions include 36 to 40, 85 to 86, and Glu-116; these read DADFD and SL. Lys-118 (N6-AMP-lysine intermediate) is an active-site residue. Arg-139, Glu-180, Lys-298, and Lys-322 together coordinate NAD(+). Cys-416, Cys-419, Cys-434, and Cys-440 together coordinate Zn(2+). Residues 613 to 707 enclose the BRCT domain; that stretch reads AASSKIAGRS…STHVDPERMV (95 aa).

It belongs to the NAD-dependent DNA ligase family. LigA subfamily. The cofactor is Mg(2+). Requires Mn(2+) as cofactor.

It catalyses the reaction NAD(+) + (deoxyribonucleotide)n-3'-hydroxyl + 5'-phospho-(deoxyribonucleotide)m = (deoxyribonucleotide)n+m + AMP + beta-nicotinamide D-nucleotide.. Functionally, DNA ligase that catalyzes the formation of phosphodiester linkages between 5'-phosphoryl and 3'-hydroxyl groups in double-stranded DNA using NAD as a coenzyme and as the energy source for the reaction. It is essential for DNA replication and repair of damaged DNA. This chain is DNA ligase, found in Nitrosospira multiformis (strain ATCC 25196 / NCIMB 11849 / C 71).